A 246-amino-acid chain; its full sequence is Pyridoxine 5'-phosphate synthase (246 aa).

3-amino-2-oxopropyl phosphate is bound at residue Asn12. Residue 14-15 (DH) participates in 1-deoxy-D-xylulose 5-phosphate binding. Arg23 provides a ligand contact to 3-amino-2-oxopropyl phosphate. His48 (proton acceptor) is an active-site residue. 2 residues coordinate 1-deoxy-D-xylulose 5-phosphate: Arg50 and His55. Glu75 serves as the catalytic Proton acceptor. Thr105 lines the 1-deoxy-D-xylulose 5-phosphate pocket. The Proton donor role is filled by His196. 3-amino-2-oxopropyl phosphate contacts are provided by residues Gly197 and 218–219 (GH).

This sequence belongs to the PNP synthase family. Homooctamer; tetramer of dimers.

Its subcellular location is the cytoplasm. It catalyses the reaction 3-amino-2-oxopropyl phosphate + 1-deoxy-D-xylulose 5-phosphate = pyridoxine 5'-phosphate + phosphate + 2 H2O + H(+). Its pathway is cofactor biosynthesis; pyridoxine 5'-phosphate biosynthesis; pyridoxine 5'-phosphate from D-erythrose 4-phosphate: step 5/5. In terms of biological role, catalyzes the complicated ring closure reaction between the two acyclic compounds 1-deoxy-D-xylulose-5-phosphate (DXP) and 3-amino-2-oxopropyl phosphate (1-amino-acetone-3-phosphate or AAP) to form pyridoxine 5'-phosphate (PNP) and inorganic phosphate. The chain is Pyridoxine 5'-phosphate synthase from Pseudomonas syringae pv. tomato (strain ATCC BAA-871 / DC3000).